The sequence spans 427 residues: Steroid C26-monooxygenase (427 aa).

A heme-binding site is contributed by cysteine 360.

Belongs to the cytochrome P450 family. Heme is required as a cofactor.

It carries out the reaction cholest-4-en-3-one + 6 reduced [2Fe-2S]-[ferredoxin] + 3 O2 + 5 H(+) = (25S)-3-oxocholest-4-en-26-oate + 6 oxidized [2Fe-2S]-[ferredoxin] + 4 H2O. Its pathway is steroid metabolism; cholesterol degradation. Its function is as follows. Involved in the utilization of cholesterol as the sole carbon and energy source by degrading the side chain. Primarily catalyzes the sequential oxidation of the terminal methyl of cholest-4-en-3-one into (25S)-26-hydroxycholest-4-en-3-one (alcohol), (25S)-26-oxocholest-4-en-3-one (aldehyde), to finally yield the carboxylic acid (25S)-3-oxocholest-4-en-26-oate. Also able to sequentially oxidize cholesterol itself, not only cholest-4-en-3-one. The polypeptide is Steroid C26-monooxygenase (Mycolicibacterium smegmatis (strain ATCC 700084 / mc(2)155) (Mycobacterium smegmatis)).